Reading from the N-terminus, the 138-residue chain is Acidic phospholipase A2 MVL-PLA2 (138 aa).

The signal sequence occupies residues 1-16 (MRTLWIVAVCLMGVEG). 7 cysteine pairs are disulfide-bonded: cysteine 42–cysteine 131, cysteine 44–cysteine 60, cysteine 59–cysteine 111, cysteine 65–cysteine 138, cysteine 66–cysteine 104, cysteine 73–cysteine 97, and cysteine 91–cysteine 102. Residues tyrosine 43, glycine 45, and glycine 47 each coordinate Ca(2+). Residue histidine 63 is part of the active site. Residue aspartate 64 coordinates Ca(2+). Positions 86–88 (NGD) match the May inhibit integrin function (Atypical cell attachment site) motif. Aspartate 105 is an active-site residue.

It belongs to the phospholipase A2 family. Group II subfamily. D49 sub-subfamily. Ca(2+) is required as a cofactor. Expressed by the venom gland.

It is found in the secreted. The catalysed reaction is a 1,2-diacyl-sn-glycero-3-phosphocholine + H2O = a 1-acyl-sn-glycero-3-phosphocholine + a fatty acid + H(+). In terms of biological role, snake venom phospholipase A2 (PLA2) that displays an inhibitory effect, independent from its catalytic activity, on tumor cell adhesion and migration. This effect is mediated via specific inhibition of integrins alpha-5/beta-1 (ITGA5/ITGB1), alpha-v/beta-3 (ITGAV/ITGB3) and alpha-v/beta-6 (ITGAV/ITGB6). PLA2 catalyzes the calcium-dependent hydrolysis of the 2-acyl groups in 3-sn-phosphoglycerides. This is Acidic phospholipase A2 MVL-PLA2 from Macrovipera lebetina transmediterranea (Blunt-nosed viper).